The sequence spans 555 residues: DNA repair and recombination protein rhm52 (555 aa).

Residues 148-152 mediate DNA binding; the sequence is KRALR. Disordered stretches follow at residues 197–232 and 251–555; these read VVAE…DSFD and HPDE…MKLN. Residues 260 to 276 are compositionally biased toward low complexity; that stretch reads NSHASGSSGNTGASTTN. Composition is skewed to polar residues over residues 283-300 and 312-334; these read SGNQ…SRMN and TPNH…QNNH. Low complexity-rich tracts occupy residues 354-375 and 382-404; these read NNNN…GPQQ and NGAA…AVAR. Over residues 468 to 478 the composition is skewed to polar residues; the sequence is DNPSNNAGNGV. Over residues 479 to 490 the composition is skewed to low complexity; the sequence is QNQPQKPQPSQQ. Residues 491-500 show a composition bias toward polar residues; that stretch reads RGSILNPQFD. Positions 536–547 are enriched in low complexity; that stretch reads PNGTSNGNGTPG.

Belongs to the RAD52 family. Part of a complex that includes RAD51, RAD52 and RAD59.

It localises to the nucleus. Involved in DNA double-strand break (DSB) repair and recombination. Promotes the annealing of complementary single-stranded DNA and by stimulation of the RAD51 recombinase. This Pyricularia oryzae (strain 70-15 / ATCC MYA-4617 / FGSC 8958) (Rice blast fungus) protein is DNA repair and recombination protein rhm52 (RHM52).